Here is a 149-residue protein sequence, read N- to C-terminus: Protein GR6 (149 aa).

In terms of tissue distribution, expressed in fetus (aged from 7 to 8 weeks). Weakly expressed in lymphocytes.

The protein is Protein GR6 of Homo sapiens (Human).